The sequence spans 341 residues: N-acetyl-gamma-glutamyl-phosphate reductase (341 aa).

The active site involves Cys151.

This sequence belongs to the NAGSA dehydrogenase family. Type 1 subfamily.

It is found in the cytoplasm. The catalysed reaction is N-acetyl-L-glutamate 5-semialdehyde + phosphate + NADP(+) = N-acetyl-L-glutamyl 5-phosphate + NADPH + H(+). Its pathway is amino-acid biosynthesis; L-arginine biosynthesis; N(2)-acetyl-L-ornithine from L-glutamate: step 3/4. Its function is as follows. Catalyzes the NADPH-dependent reduction of N-acetyl-5-glutamyl phosphate to yield N-acetyl-L-glutamate 5-semialdehyde. The protein is N-acetyl-gamma-glutamyl-phosphate reductase of Chlorobaculum tepidum (strain ATCC 49652 / DSM 12025 / NBRC 103806 / TLS) (Chlorobium tepidum).